The chain runs to 167 residues: Translationally-controlled tumor protein homolog (167 aa).

Positions 1–167 (MLIFEDVISG…WKHGVKENKI (167 aa)) constitute a TCTP domain.

It belongs to the TCTP family.

The protein localises to the cytoplasm. Its subcellular location is the cytoskeleton. Involved in protein synthesis. Involved in microtubule stabilization. The protein is Translationally-controlled tumor protein homolog (TMA19) of Candida albicans (strain SC5314 / ATCC MYA-2876) (Yeast).